The primary structure comprises 93 residues: Neutrophil cationic peptide 2 (93 aa).

Positions 1–19 (MRTVPLFAACLLLTLMAQA) are cleaved as a signal peptide. The propeptide occupies 20–62 (EPLPRAADHSDTKMKGDREDHVAVISFWEEESTSLQDAGAGAG). Disulfide bonds link Cys65-Cys93, Cys67-Cys82, and Cys72-Cys92.

The protein belongs to the alpha-defensin family.

It is found in the secreted. Functionally, has antibiotic, anti-fungi and antiviral activity. The protein is Neutrophil cationic peptide 2 of Cavia porcellus (Guinea pig).